Here is a 77-residue protein sequence, read N- to C-terminus: NAD(P)H-quinone oxidoreductase subunit L (77 aa).

Transmembrane regions (helical) follow at residues 10-30 and 48-68; these read LLIATLYLSLSVTYLLVLPAG and LVMYFFVFFLFPGMLLLSPFL.

It belongs to the complex I NdhL subunit family. In terms of assembly, NDH-1 can be composed of about 15 different subunits; different subcomplexes with different compositions have been identified which probably have different functions.

It is found in the cellular thylakoid membrane. The catalysed reaction is a plastoquinone + NADH + (n+1) H(+)(in) = a plastoquinol + NAD(+) + n H(+)(out). It catalyses the reaction a plastoquinone + NADPH + (n+1) H(+)(in) = a plastoquinol + NADP(+) + n H(+)(out). In terms of biological role, NDH-1 shuttles electrons from an unknown electron donor, via FMN and iron-sulfur (Fe-S) centers, to quinones in the respiratory and/or the photosynthetic chain. The immediate electron acceptor for the enzyme in this species is believed to be plastoquinone. Couples the redox reaction to proton translocation, and thus conserves the redox energy in a proton gradient. Cyanobacterial NDH-1 also plays a role in inorganic carbon-concentration. The sequence is that of NAD(P)H-quinone oxidoreductase subunit L from Picosynechococcus sp. (strain ATCC 27264 / PCC 7002 / PR-6) (Agmenellum quadruplicatum).